We begin with the raw amino-acid sequence, 913 residues long: Protein ECT2 (913 aa).

An N-acetylalanine modification is found at Ala2. BRCT domains are found at residues 176-260 (MLNL…AAVD) and 266-354 (FKVP…MYLY). At Thr359 the chain carries Phosphothreonine; by PKC/PRKCI. Phosphoserine is present on residues Ser367 and Ser370. Thr373 is modified (phosphothreonine). Ser376 carries the phosphoserine modification. 2 consecutive short sequence motifs (nuclear localization signal) follow at residues 378 to 382 (RKRRR) and 401 to 405 (PRKRP). Disordered regions lie at residues 389–415 (QLSR…SIGS) and 427–450 (IHYG…PPKQ). Residue Thr444 is modified to Phosphothreonine; by CDK1. Positions 452–641 (ARWQVAKELY…KEVMTHINED (190 aa)) constitute a DH domain. Lys611 is covalently cross-linked (Glycyl lysine isopeptide (Lys-Gly) (interchain with G-Cter in SUMO2)). In terms of domain architecture, PH spans 675-794 (RVETVSLGEH…KMLCRHVANT (120 aa)). Residues Ser716 and Ser842 each carry the phosphoserine modification. Thr846 is subject to Phosphothreonine; by CDK1. Positions 853–874 (MALSSSHSSEGRSPPSSGKLAV) are disordered. Residues 856 to 870 (SSSHSSEGRSPPSSG) show a composition bias toward low complexity. A phosphoserine mark is found at Ser861 and Ser865.

Homodimer. Homooligomer. Found in the centralspindlin complex. Interacts with NR1I3. Interacts (Thr-359 phosphorylated form) with PARD6A; the interaction is observed in cancer cells. Interacts (Thr-359 phosphorylated form) with PRKCI; the interaction is observed in cancer cells. Interacts with PKP4; the interaction is observed at the midbody. Interacts with RACGAP1; the interaction is direct, occurs in a microtubule-dependent manner, occurs at anaphase and during cytokinesis, is inhibited in metaphase by phosphorylation of ECT2 on Thr-373 and is stimulated in early anaphase by dephosphorylation of ECT2 probably on Thr-373 through CDK1 activity. Interacts with PLK1; the interaction is stimulated upon its phosphorylation on Thr-444. Interacts with RHOA; the interaction results in allosteric activation of ECT2. Interacts with KIF23, PARD3, PARD6B and PRKCQ. Interacts with NEDD9/HEF1. Post-translationally, phosphorylated by PLK1 in vitro. Hyperphosphorylated during the G2 phase of the cell cycle. Phosphorylation at Thr-373 occurs during the G2/M phase, relieves its auto-inhibition status and stimulates its GEF activity. Phosphorylation at Thr-444 in G2/M phase is required for subsequent binding with PLK1 and Rho exchange activation. Dephosphorylated at the time of cytokinesis. Phosphorylation at Thr-359 is required for its transformation activity in cancer cells. Highest expression in testis. Also detectable in brain, kidney, liver and spleen.

It localises to the nucleus. It is found in the cytoplasm. The protein resides in the cytoskeleton. Its subcellular location is the spindle. The protein localises to the cleavage furrow. It localises to the midbody. It is found in the cell junction. The protein resides in the tight junction. Autoinhibited by the C-terminal PH domain which folds back and binds to the surface of the DH domain, blocking binding of RHOA to the catalytic center of the DH domain. The 2nd BRCT domain is also involved in inhibition, probably by helping to impede RHOA binding. Allosterically activated by binding of activated GTP-bound RHOA to the PH domain which stimulates the release of PH inhibition and promotes the binding of substrate RHOA to the catalytic center. Binding of phosphorylated RACGAP1 to the N-terminal BRCT domain-containing region also releases autoinhibition. Guanine nucleotide exchange factor (GEF) that catalyzes the exchange of GDP for GTP. Promotes guanine nucleotide exchange on the Rho family members of small GTPases, like RHOA, RHOC, RAC1 and CDC42. Required for signal transduction pathways involved in the regulation of cytokinesis. Component of the centralspindlin complex that serves as a microtubule-dependent and Rho-mediated signaling required for the myosin contractile ring formation during the cell cycle cytokinesis. Regulates the translocation of RHOA from the central spindle to the equatorial region. Plays a role in the control of mitotic spindle assembly; regulates the activation of CDC42 in metaphase for the process of spindle fibers attachment to kinetochores before chromosome congression. Involved in the regulation of epithelial cell polarity; participates in the formation of epithelial tight junctions in a polarity complex PARD3-PARD6-protein kinase PRKCQ-dependent manner. Plays a role in the regulation of neurite outgrowth. Inhibits phenobarbital (PB)-induced NR1I3 nuclear translocation. Stimulates the activity of RAC1 through its association with the oncogenic PARD6A-PRKCI complex in cancer cells, thereby acting to coordinately drive tumor cell proliferation and invasion. Also stimulates genotoxic stress-induced RHOB activity in breast cancer cells leading to their cell death. The protein is Protein ECT2 (Ect2) of Mus musculus (Mouse).